We begin with the raw amino-acid sequence, 587 residues long: Proteasome-associated ATPase (587 aa).

Residues 1–94 (MAARDDAEAR…KEEVDRLAQP (94 aa)) are a coiled coil. Residue 276 to 281 (GCGKTL) coordinates ATP. The segment at 586–587 (YL) is docks into pockets in the proteasome alpha-ring.

Belongs to the AAA ATPase family. Homohexamer. Assembles into a hexameric ring structure that caps the 20S proteasome core. Strongly interacts with the prokaryotic ubiquitin-like protein Pup through a hydrophobic interface; the interacting region of ARC lies in its N-terminal coiled-coil domain. There is one Pup binding site per ARC hexamer ring. Upon ATP-binding, the C-terminus of ARC interacts with the alpha-rings of the proteasome core, possibly by binding to the intersubunit pockets.

Its pathway is protein degradation; proteasomal Pup-dependent pathway. Its function is as follows. ATPase which is responsible for recognizing, binding, unfolding and translocation of pupylated proteins into the bacterial 20S proteasome core particle. May be essential for opening the gate of the 20S proteasome via an interaction with its C-terminus, thereby allowing substrate entry and access to the site of proteolysis. Thus, the C-termini of the proteasomal ATPase may function like a 'key in a lock' to induce gate opening and therefore regulate proteolysis. In Streptosporangium roseum (strain ATCC 12428 / DSM 43021 / JCM 3005 / KCTC 9067 / NCIMB 10171 / NRRL 2505 / NI 9100), this protein is Proteasome-associated ATPase.